The primary structure comprises 206 residues: MILVFLGPPGAGKGTQAKRLAKEKGFVHISTGDILREAVQKGTPLGKKAKEYMERGELVPDDLIIALIEEVFPKHGNVIFDGFPRTVKQAEALDEMLEKKGLKVDHVLLFEVPDEVVIERLSGRRINPETGEVYHVKYNPPPPGVKVIQREDDKPEVIKKRLEVYREQTAPLIEYYKKKGILRIIDASKPVEEVYRQVLEVIGDGN.

Residue 10-15 participates in ATP binding; that stretch reads GAGKGT. The interval 30-59 is NMP; that stretch reads STGDILREAVQKGTPLGKKAKEYMERGELV. AMP-binding positions include T31, 57-59, 82-85, and Q89; these read ELV and GFPR. ATP-binding positions include R120, R124, and 133–134; that span reads VY. An LID region spans residues 123 to 153; sequence GRRINPETGEVYHVKYNPPPPGVKVIQREDD. R161 contacts AMP. An ATP-binding site is contributed by K189.

This sequence belongs to the adenylate kinase family. In terms of assembly, monomer.

The protein localises to the cytoplasm. It catalyses the reaction AMP + ATP = 2 ADP. It participates in purine metabolism; AMP biosynthesis via salvage pathway; AMP from ADP: step 1/1. Its function is as follows. Catalyzes the reversible transfer of the terminal phosphate group between ATP and AMP. Plays an important role in cellular energy homeostasis and in adenine nucleotide metabolism. The polypeptide is Adenylate kinase (Aquifex aeolicus (strain VF5)).